The sequence spans 158 residues: Large ribosomal subunit protein uL13 (158 aa).

The segment at P129 to R158 is disordered. The segment covering G144–R158 has biased composition (low complexity).

Belongs to the universal ribosomal protein uL13 family. Part of the 50S ribosomal subunit.

This protein is one of the early assembly proteins of the 50S ribosomal subunit, although it is not seen to bind rRNA by itself. It is important during the early stages of 50S assembly. The sequence is that of Large ribosomal subunit protein uL13 from Anaplasma phagocytophilum (strain HZ).